Consider the following 195-residue polypeptide: Guanylate kinase (195 aa).

Residues 12–191 (GLIILISGPS…TIEDIKQLIL (180 aa)) enclose the Guanylate kinase-like domain. Position 19–26 (19–26 (GPSGVGKG)) interacts with ATP.

The protein belongs to the guanylate kinase family.

Its subcellular location is the cytoplasm. It carries out the reaction GMP + ATP = GDP + ADP. Essential for recycling GMP and indirectly, cGMP. The chain is Guanylate kinase (gmk) from Mycoplasmoides gallisepticum (strain R(low / passage 15 / clone 2)) (Mycoplasma gallisepticum).